Reading from the N-terminus, the 118-residue chain is UPF0342 protein LCK_01004 (118 aa).

Belongs to the UPF0342 family.

The sequence is that of UPF0342 protein LCK_01004 from Leuconostoc citreum (strain KM20).